Reading from the N-terminus, the 401-residue chain is MKKLWQNCHIATMQNGQYSYIEDAAIVTEGHLIHWIGKQQQLPADTYSETVDLNGAWVTPGFIDCHTHSVFGGNRSVEFEKRLQGVSYAEIAASGGGIASTVRATREASEEQLLNSALKRIRCMQQDGVTTIEIKSGYGLNYENERKMLRVIRQIGEKLPMTVKSTCLAAHALPPEYKDQSDAYIEHICTEMLPKLHAEGLVDAVDAFCEHLAFSPAQVERVFKTAQSLNLPVKLHAEQLSSLGGSSLAARYHALSADHLEYMTEDDVKAMAASGTVAVLLPGAFYLLRETQYPPIESLIKHGVRIALSSDLNPGTSPALSLRLMLNMGSTLFRLTPEQALAGVTIHAAQALGLEQTHGSLEQGKVADFVAWDIEHPSEIVYWLGGDLPKRVVQHGQEVIF.

Residues His66 and His68 each coordinate Fe(3+). Residues His66 and His68 each coordinate Zn(2+). 3 residues coordinate 4-imidazolone-5-propanoate: Arg75, Tyr138, and His171. N-formimidoyl-L-glutamate is bound at residue Tyr138. His236 contributes to the Fe(3+) binding site. Residue His236 coordinates Zn(2+). Gln239 contacts 4-imidazolone-5-propanoate. Residue Asp311 participates in Fe(3+) binding. A Zn(2+)-binding site is contributed by Asp311. N-formimidoyl-L-glutamate is bound by residues Asn313 and Gly315. Position 316 (Thr316) interacts with 4-imidazolone-5-propanoate.

This sequence belongs to the metallo-dependent hydrolases superfamily. HutI family. It depends on Zn(2+) as a cofactor. Requires Fe(3+) as cofactor.

Its subcellular location is the cytoplasm. It catalyses the reaction 4-imidazolone-5-propanoate + H2O = N-formimidoyl-L-glutamate. The protein operates within amino-acid degradation; L-histidine degradation into L-glutamate; N-formimidoyl-L-glutamate from L-histidine: step 3/3. Its function is as follows. Catalyzes the hydrolytic cleavage of the carbon-nitrogen bond in imidazolone-5-propanoate to yield N-formimidoyl-L-glutamate. It is the third step in the universal histidine degradation pathway. This chain is Imidazolonepropionase, found in Acinetobacter baumannii (strain ATCC 17978 / DSM 105126 / CIP 53.77 / LMG 1025 / NCDC KC755 / 5377).